We begin with the raw amino-acid sequence, 477 residues long: Proton-coupled amino acid transporter 3 (477 aa).

Residues 1–54 are Cytoplasmic-facing; that stretch reads MGNVPLLREVGKCQRNMFGRSTASSKGSSNSRSSSSTSPKKGPRREADALMFIQ. Residues 19–40 are compositionally biased toward low complexity; the sequence is GRSTASSKGSSNSRSSSSTSPK. The segment at 19 to 43 is disordered; the sequence is GRSTASSKGSSNSRSSSSTSPKKGP. The helical transmembrane segment at 55–75 threads the bilayer; sequence IFIHLLKSNIGTGFLGLPLAV. Residues 76–77 lie on the Extracellular side of the membrane; that stretch reads KN. A helical transmembrane segment spans residues 78–98; the sequence is AGLLVGPVSLLAIGALTVHCM. Residues 99–144 are Cytoplasmic-facing; that stretch reads DILLNCACHLTQRLQRSFVNYEETTMYSLETCPSPWLRTHSVWGRY. A helical membrane pass occupies residues 145-165; that stretch reads VVSFLLIVTQLGFCSVYFMFL. Residues 166 to 202 are Extracellular-facing; sequence ADNLQQIMEEAHFTSNVCQPRQSLVMTSILDTRFYML. The helical transmembrane segment at 203–223 threads the bilayer; that stretch reads TILPFLILLVLIQNPQVLSIF. Residues 224 to 225 lie on the Cytoplasmic side of the membrane; the sequence is ST. A helical transmembrane segment spans residues 226–246; that stretch reads LATITTLSSLALIFEYLIQTP. Residues 247-259 lie on the Extracellular side of the membrane; the sequence is HHSNLPLVANWKT. The helical transmembrane segment at 260 to 280 threads the bilayer; the sequence is FLLFFGTAIFTFEGVGMVLPL. Residues 281-291 lie on the Cytoplasmic side of the membrane; that stretch reads KSQMKSPQQFP. Residues 292-312 form a helical membrane-spanning segment; sequence AVLYLGMSFVIFLYICLGTLG. At 313–344 the chain is on the extracellular side; it reads YMKFGTDTQASITLNLPICWLYQSVKLMYSVG. Residues 345 to 365 form a helical membrane-spanning segment; that stretch reads IFFTYALQFHVPAEIIVPYVV. Topologically, residues 366–374 are cytoplasmic; it reads SRVSENWAL. Residues 375–395 form a helical membrane-spanning segment; the sequence is FVDLTVRTALVCLTCFSAVLI. The Extracellular segment spans residues 396–399; sequence PRLD. A helical membrane pass occupies residues 400-420; sequence LVISLVGSVSSSALAIIIPPL. Residues 421–432 lie on the Cytoplasmic side of the membrane; that stretch reads LEIATFYSENIS. The helical transmembrane segment at 433–453 threads the bilayer; it reads CATIVKDIMISILGLLGCVLG. The Extracellular portion of the chain corresponds to 454 to 477; that stretch reads TYQALYEMTQQTHFYMANSTRVHI.

Belongs to the amino acid/polyamine transporter 2 family. As to expression, specifically expressed in testis.

Its subcellular location is the membrane. This is Proton-coupled amino acid transporter 3 (Slc36a3) from Mus musculus (Mouse).